Here is a 763-residue protein sequence, read N- to C-terminus: Phosphoglycerol transferase I (763 aa).

The next 4 helical transmembrane spans lie at 1–21 (MSEL…AWKA), 26–46 (WWFA…ITLF), 77–97 (ILPG…LGWI), and 108–128 (FGYS…SPAF).

Belongs to the OpgB family.

It is found in the cell inner membrane. The enzyme catalyses a phosphatidylglycerol + a membrane-derived-oligosaccharide D-glucose = a 1,2-diacyl-sn-glycerol + a membrane-derived-oligosaccharide 6-(glycerophospho)-D-glucose.. It participates in glycan metabolism; osmoregulated periplasmic glucan (OPG) biosynthesis. Its function is as follows. Transfers a phosphoglycerol residue from phosphatidylglycerol to the membrane-bound nascent glucan backbones. This Escherichia coli O45:K1 (strain S88 / ExPEC) protein is Phosphoglycerol transferase I.